The following is a 327-amino-acid chain: Expansin-B7 (327 aa).

The signal sequence occupies residues 1–30; the sequence is MAGRSRRRSFWSVGVAAALLCLLAAHGCSA. Positions 30–88 are disordered; sequence AKHHKPKPTPGGISGNASSSSSNSSTPSIPPPVAPTPTAPTPPIPSPGTGSSNGSSGGG. The segment covering 44 to 56 has biased composition (low complexity); that stretch reads GNASSSSSNSSTP. 2 N-linked (GlcNAc...) asparagine glycosylation sites follow: Asn45 and Asn52. The segment covering 57-75 has biased composition (pro residues); sequence SIPPPVAPTPTAPTPPIPS. Residue Asn82 is glycosylated (N-linked (GlcNAc...) asparagine). One can recognise an Expansin-like EG45 domain in the interval 112–218; sequence GGACGFKNVN…RRVPCQYPGL (107 aa). 3 disulfide bridges follow: Cys115–Cys143, Cys146–Cys213, and Cys151–Cys157. Residues 231-322 enclose the Expansin-like CBD domain; that stretch reads VYMAILVEYE…DWQPNTVYSS (92 aa). Asn298 carries N-linked (GlcNAc...) asparagine glycosylation.

Belongs to the expansin family. Expansin B subfamily.

The protein localises to the secreted. It is found in the cell wall. It localises to the membrane. May cause loosening and extension of plant cell walls by disrupting non-covalent bonding between cellulose microfibrils and matrix glucans. No enzymatic activity has been found. May be required for rapid internodal elongation in deepwater rice during submergence. The polypeptide is Expansin-B7 (EXPB7) (Oryza sativa subsp. japonica (Rice)).